A 642-amino-acid polypeptide reads, in one-letter code: Core protein VP4 (642 aa).

Belongs to the orbivirus VP4 family.

It is found in the virion. In terms of biological role, the VP4 protein is one of the five proteins (with VP1, VP3, VP6 and VP7) which form the inner capsid of the virus. The chain is Core protein VP4 (Segment-4) from African horse sickness virus (AHSV).